The following is a 552-amino-acid chain: Thermosome subunit beta (552 aa).

A disordered region spans residues Ala531–Asp552. Residues Gly540–Asp552 show a composition bias toward basic and acidic residues.

Belongs to the TCP-1 chaperonin family. Forms a heterooligomeric complex of two stacked nine-membered rings; one of alpha and the other of beta subunits. Sometimes called a 'rosettasome'.

The protein localises to the cytoplasm. It catalyses the reaction ATP + H2O = ADP + phosphate + H(+). Its function is as follows. Molecular chaperone; binds unfolded polypeptides in vitro, stimulates protein folding and has ATPase activity. One of the most abundant proteins in the cell at all temperatures. The chain is Thermosome subunit beta (thsB) from Saccharolobus shibatae (strain ATCC 51178 / DSM 5389 / JCM 8931 / NBRC 15437 / B12) (Sulfolobus shibatae).